We begin with the raw amino-acid sequence, 214 residues long: Cytochrome c biogenesis ATP-binding export protein CcmA (214 aa).

Residues 12–214 (LAAHALAFSR…TRMLTLEAAA (203 aa)) enclose the ABC transporter domain. 44–51 (GDNGAGKT) is a binding site for ATP.

It belongs to the ABC transporter superfamily. CcmA exporter (TC 3.A.1.107) family. The complex is composed of two ATP-binding proteins (CcmA) and two transmembrane proteins (CcmB).

It localises to the cell inner membrane. The enzyme catalyses heme b(in) + ATP + H2O = heme b(out) + ADP + phosphate + H(+). In terms of biological role, part of the ABC transporter complex CcmAB involved in the biogenesis of c-type cytochromes; once thought to export heme, this seems not to be the case, but its exact role is uncertain. Responsible for energy coupling to the transport system. The polypeptide is Cytochrome c biogenesis ATP-binding export protein CcmA (Xanthomonas oryzae pv. oryzae (strain MAFF 311018)).